A 484-amino-acid chain; its full sequence is Calcium-dependent protein kinase 26 (484 aa).

The Protein kinase domain occupies 24–282 (YSLGHKLGQG…AHQVLRHPWI (259 aa)). Residues 30-38 (LGQGQFGTT) and Lys53 each bind ATP. The active-site Proton acceptor is Asp148. Ser188 is subject to Phosphoserine. Positions 288–318 (APDRALDPAVLSRLKQFSAMNKLKQMALRVI) are autoinhibitory domain. 4 consecutive EF-hand domains span residues 325–360 (EEIAGLKEMFKAMDTDNSGAITFDELKAGLRRYGST), 361–396 (LKDTEIRDLMEAADIDKSGTIDYGEFIAATIHLNKL), 397–432 (EREEHLLSAFRYFDKDGSGYITIDELQHACAEQGMS), and 436–466 (LEDVIKEVDQDNDGRIDYGEFVAMMQKGIVG). Residues Asp338, Asp340, Ser342, Glu349, Asp374, Asp376, Ser378, Thr380, Glu385, Asp410, Asp412, Ser414, Tyr416, Glu421, Asp444, Asp446, Asp448, Arg450, and Glu455 each contribute to the Ca(2+) site.

This sequence belongs to the protein kinase superfamily. Ser/Thr protein kinase family. CDPK subfamily.

It carries out the reaction L-seryl-[protein] + ATP = O-phospho-L-seryl-[protein] + ADP + H(+). It catalyses the reaction L-threonyl-[protein] + ATP = O-phospho-L-threonyl-[protein] + ADP + H(+). Activated by calcium. Autophosphorylation may play an important role in the regulation of the kinase activity. In terms of biological role, may play a role in signal transduction pathways that involve calcium as a second messenger. This chain is Calcium-dependent protein kinase 26 (CPK26), found in Arabidopsis thaliana (Mouse-ear cress).